The sequence spans 382 residues: Lipid-A-disaccharide synthase (382 aa).

This sequence belongs to the LpxB family.

The enzyme catalyses 2-N,3-O-bis[(3R)-3-hydroxytetradecanoyl]-alpha-D-glucosaminyl 1-phosphate + UDP-2-N,3-O-bis[(3R)-3-hydroxytetradecanoyl]-alpha-D-glucosamine = lipid A disaccharide (E. coli) + UDP + H(+). It catalyses the reaction a lipid X + a UDP-2-N,3-O-bis[(3R)-3-hydroxyacyl]-alpha-D-glucosamine = a lipid A disaccharide + UDP + H(+). It functions in the pathway glycolipid biosynthesis; lipid IV(A) biosynthesis; lipid IV(A) from (3R)-3-hydroxytetradecanoyl-[acyl-carrier-protein] and UDP-N-acetyl-alpha-D-glucosamine: step 5/6. Its function is as follows. Condensation of UDP-2,3-diacylglucosamine and 2,3-diacylglucosamine-1-phosphate to form lipid A disaccharide, a precursor of lipid A, a phosphorylated glycolipid that anchors the lipopolysaccharide to the outer membrane of the cell. The polypeptide is Lipid-A-disaccharide synthase (Escherichia fergusonii (strain ATCC 35469 / DSM 13698 / CCUG 18766 / IAM 14443 / JCM 21226 / LMG 7866 / NBRC 102419 / NCTC 12128 / CDC 0568-73)).